We begin with the raw amino-acid sequence, 133 residues long: Beta-synuclein (133 aa).

Repeat copies occupy residues 20–30 and 31–41. Residues 20–66 form a 4 X 11 AA tandem repeats of [EGS]-K-T-K-[EQ]-[GQ]-V-X(4) region; sequence EKTKQGVTEAAEKTKEGVLYVGSKTSGVVQGVASVAEKTKEQASHLG. The stretch at 42–55 is one 3; approximate repeat; the sequence is SKTSGVVQGVASVA. Ser45 is modified (phosphoserine). The stretch at 56–66 is repeat 4; sequence EKTKEQASHLG. The tract at residues 96–133 is disordered; it reads EVAQEAAEEPLIEPLMEPEGESYEDSPQEEYQEYEPEA. The segment covering 97–133 has biased composition (acidic residues); the sequence is VAQEAAEEPLIEPLMEPEGESYEDSPQEEYQEYEPEA. At Ser117 the chain carries Phosphoserine; by BARK1, CK2 and GRK5.

This sequence belongs to the synuclein family. In terms of processing, phosphorylated. Phosphorylation by G-protein coupled receptor kinases (GRK) is more efficient than phosphorylation by CK1, CK2 and CaM-kinase II. In terms of tissue distribution, highly expressed in the brain.

It localises to the cytoplasm. Functionally, may be involved in neuronal plasticity. The sequence is that of Beta-synuclein (Sncb) from Mus musculus (Mouse).